A 146-amino-acid polypeptide reads, in one-letter code: Hemoglobin subunit beta (146 aa).

Residue valine 1 is modified to N-acetylvaline. The Globin domain maps to 2–146; that stretch reads HLTPEEKTAV…VANALAHKYH (145 aa). Residue threonine 12 is modified to Phosphothreonine. A Phosphoserine modification is found at serine 44. Lysine 59 is subject to N6-acetyllysine. Histidine 63 serves as a coordination point for heme b. Lysine 82 is subject to N6-acetyllysine. Histidine 92 is a binding site for heme b. Residue cysteine 93 is modified to S-nitrosocysteine. Lysine 144 is subject to N6-acetyllysine.

This sequence belongs to the globin family. As to quaternary structure, heterotetramer of two alpha chains and two beta chains. Red blood cells.

Involved in oxygen transport from the lung to the various peripheral tissues. This is Hemoglobin subunit beta (HBB) from Mandrillus sphinx (Mandrill).